A 455-amino-acid polypeptide reads, in one-letter code: 3-phosphoshikimate 1-carboxyvinyltransferase (455 aa).

The interval 1 to 23 is disordered; it reads MSHGSNPRPATARKSSDLKGTLR. Residues Lys-28, Ser-29, and Arg-33 each contribute to the 3-phosphoshikimate site. Lys-28 provides a ligand contact to phosphoenolpyruvate. 2 residues coordinate phosphoenolpyruvate: Gly-100 and Arg-128. Residues Ser-173, Gln-175, Asp-326, and Lys-353 each coordinate 3-phosphoshikimate. Phosphoenolpyruvate is bound at residue Gln-175. Asp-326 (proton acceptor) is an active-site residue. Phosphoenolpyruvate is bound by residues Arg-357 and Arg-405.

The protein belongs to the EPSP synthase family. In terms of assembly, monomer.

Its subcellular location is the cytoplasm. It carries out the reaction 3-phosphoshikimate + phosphoenolpyruvate = 5-O-(1-carboxyvinyl)-3-phosphoshikimate + phosphate. It functions in the pathway metabolic intermediate biosynthesis; chorismate biosynthesis; chorismate from D-erythrose 4-phosphate and phosphoenolpyruvate: step 6/7. Its function is as follows. Catalyzes the transfer of the enolpyruvyl moiety of phosphoenolpyruvate (PEP) to the 5-hydroxyl of shikimate-3-phosphate (S3P) to produce enolpyruvyl shikimate-3-phosphate and inorganic phosphate. This Rhizobium meliloti (strain 1021) (Ensifer meliloti) protein is 3-phosphoshikimate 1-carboxyvinyltransferase.